The following is a 154-amino-acid chain: ORF3b protein (154 aa).

Positions 80–138 (LQTLVLKMLHSSSLTSLLKTHRMCKYTQSTALQELLIQQWIQFMMSRRRLLACLCKHKK) are mitochondrial targeting signal. The tract at residues 134-154 (CKHKKVSTNLCTHSFRKKQVR) is nucleolar targeting. The Bipartite nuclear localization signal motif lies at 135–153 (KHKKVSTNLCTHSFRKKQV).

In terms of assembly, interacts with host RUNX1 isoform b.

It localises to the host nucleus. Its subcellular location is the host nucleolus. The protein resides in the host mitochondrion. Induces host cell G0/G1 arrest and apoptosis. The protein is ORF3b protein of Homo sapiens (Human).